The sequence spans 1342 residues: DNA-directed RNA polymerase subunit beta (1342 aa).

The protein belongs to the RNA polymerase beta chain family. In terms of assembly, the RNAP catalytic core consists of 2 alpha, 1 beta, 1 beta' and 1 omega subunit. When a sigma factor is associated with the core the holoenzyme is formed, which can initiate transcription.

It carries out the reaction RNA(n) + a ribonucleoside 5'-triphosphate = RNA(n+1) + diphosphate. Functionally, DNA-dependent RNA polymerase catalyzes the transcription of DNA into RNA using the four ribonucleoside triphosphates as substrates. The protein is DNA-directed RNA polymerase subunit beta of Serratia proteamaculans (strain 568).